A 129-amino-acid chain; its full sequence is Ig lambda-1 chain V region S43 (129 aa).

An N-terminal signal peptide occupies residues 1 to 19 (MAWISLILSLLALSSGAIS). Residue Q20 is modified to Pyrrolidone carboxylic acid. The Ig-like domain maps to 20 to 125 (QAVVTQESAL…HWVFGGGTKL (106 aa)).

This chain is Ig lambda-1 chain V region S43, found in Mus musculus (Mouse).